The chain runs to 225 residues: Rho GDP-dissociation inhibitor 3 (225 aa).

Belongs to the Rho GDI family. As to expression, detected only in brain, lung, kidney and testis.

Its subcellular location is the cytoplasm. Functionally, inhibits GDP/GTP exchange reaction of RhoB. Interacts specifically with the GDP- and GTP-bound forms of post-translationally processed Rhob and Rhog proteins, both of which show a growth-regulated expression in mammalian cells. Stimulates the release of the GDP-bound but not the GTP-bound RhoB protein. Also inhibits the GDP/GTP exchange of RhoB but shows less ability to inhibit the dissociation of prebound GTP. This chain is Rho GDP-dissociation inhibitor 3 (Arhgdig), found in Mus musculus (Mouse).